A 267-amino-acid chain; its full sequence is 5'-nucleotidase SurE (267 aa).

A divalent metal cation-binding residues include Asp-14, Asp-15, Ser-45, and Asn-100.

Belongs to the SurE nucleotidase family. A divalent metal cation is required as a cofactor.

The protein resides in the cytoplasm. The enzyme catalyses a ribonucleoside 5'-phosphate + H2O = a ribonucleoside + phosphate. Functionally, nucleotidase that shows phosphatase activity on nucleoside 5'-monophosphates. This is 5'-nucleotidase SurE from Methanosarcina barkeri (strain Fusaro / DSM 804).